The sequence spans 72 residues: Large ribosomal subunit protein bL31 (72 aa).

Residues C16, C18, C38, and C41 each contribute to the Zn(2+) site.

Belongs to the bacterial ribosomal protein bL31 family. Type A subfamily. In terms of assembly, part of the 50S ribosomal subunit. Zn(2+) is required as a cofactor.

Binds the 23S rRNA. The chain is Large ribosomal subunit protein bL31 from Vibrio cholerae serotype O1 (strain ATCC 39541 / Classical Ogawa 395 / O395).